The sequence spans 505 residues: Aminoaldehyde dehydrogenase 1a (505 aa).

Residue Asp101 participates in Na(+) binding. NAD(+) is bound by residues 161-163 (TPW) and 187-190 (KPSE). Leu191 serves as a coordination point for Na(+). NAD(+)-binding positions include 241-244 (SFET) and Glu262. Glu262 acts as the Proton acceptor in catalysis. Cys296 functions as the Nucleophile in the catalytic mechanism. Residues Glu395 and Trp461 each contribute to the NAD(+) site.

It belongs to the aldehyde dehydrogenase family. Forms homodimers.

It catalyses the reaction 4-aminobutanal + NAD(+) + H2O = 4-aminobutanoate + NADH + 2 H(+). The catalysed reaction is 3-aminopropanal + NAD(+) + H2O = beta-alanine + NADH + 2 H(+). It carries out the reaction 4-(trimethylamino)butanal + NAD(+) + H2O = 4-(trimethylamino)butanoate + NADH + 2 H(+). The enzyme catalyses 4-guanidinobutanal + NAD(+) + H2O = 4-guanidinobutanoate + NADH + 2 H(+). It catalyses the reaction betaine aldehyde + NAD(+) + H2O = glycine betaine + NADH + 2 H(+). It functions in the pathway amine and polyamine biosynthesis; betaine biosynthesis via choline pathway; betaine from betaine aldehyde: step 1/1. Functionally, dehydrogenase that catalyzes the oxidation of several aminoaldehydes. Metabolizes and detoxifies aldehyde products of polyamine degradation to non-toxic amino acids. Catalyzes the oxidation of 4-aminobutanal and 3-aminopropanal to 4-aminobutanoate and beta-alanine, respectively. Catalyzes the oxidation of 4-(trimethylamino)butanal and 4-guanidinobutanal to 4-trimethylammoniobutanoate and 4-guanidinobutanoate, respectively. Catalyzes the oxidation of betaine aldehyde to glycine betaine. Dehydrogenase that catalyzes the oxidation of several aminoaldehydes. Catalyzes the oxidation of betaine aldehyde to glycine betaine. Catalyzes the oxidation of 4-(trimethylamino)butanal to 4-trimethylammoniobutanoate. This chain is Aminoaldehyde dehydrogenase 1a, found in Zea mays (Maize).